Reading from the N-terminus, the 281-residue chain is Homoserine kinase (281 aa).

ATP is bound at residue 83–93 (PVSSGLGSSAA).

The protein belongs to the GHMP kinase family. Homoserine kinase subfamily.

It is found in the cytoplasm. The catalysed reaction is L-homoserine + ATP = O-phospho-L-homoserine + ADP + H(+). It functions in the pathway amino-acid biosynthesis; L-threonine biosynthesis; L-threonine from L-aspartate: step 4/5. Its function is as follows. Catalyzes the ATP-dependent phosphorylation of L-homoserine to L-homoserine phosphate. The polypeptide is Homoserine kinase (Thermotoga petrophila (strain ATCC BAA-488 / DSM 13995 / JCM 10881 / RKU-1)).